We begin with the raw amino-acid sequence, 68 residues long: Protein SlyX homolog (68 aa).

Belongs to the SlyX family.

The polypeptide is Protein SlyX homolog (Pseudomonas fluorescens (strain ATCC BAA-477 / NRRL B-23932 / Pf-5)).